A 210-amino-acid chain; its full sequence is Na(+)-translocating NADH-quinone reductase subunit D (210 aa).

A run of 5 helical transmembrane segments spans residues 42–62 (FVMT…VSVI), 72–92 (IIVQ…ILKA), 103–123 (VFVG…AFAM), 131–151 (LIDG…VGFF), and 178–198 (NGLM…IWAI).

Belongs to the NqrDE/RnfAE family. In terms of assembly, composed of six subunits; NqrA, NqrB, NqrC, NqrD, NqrE and NqrF.

It localises to the cell inner membrane. It carries out the reaction a ubiquinone + n Na(+)(in) + NADH + H(+) = a ubiquinol + n Na(+)(out) + NAD(+). Its function is as follows. NQR complex catalyzes the reduction of ubiquinone-1 to ubiquinol by two successive reactions, coupled with the transport of Na(+) ions from the cytoplasm to the periplasm. NqrA to NqrE are probably involved in the second step, the conversion of ubisemiquinone to ubiquinol. The chain is Na(+)-translocating NADH-quinone reductase subunit D from Vibrio vulnificus (strain YJ016).